The sequence spans 364 residues: DNA polymerase IV (364 aa).

The UmuC domain maps to 14 to 198 (IIHIDMDAFF…LPIEKFHGVG (185 aa)). Positions 18 and 116 each coordinate Mg(2+). The active site involves E117.

It belongs to the DNA polymerase type-Y family. In terms of assembly, monomer. Mg(2+) is required as a cofactor.

The protein resides in the cytoplasm. The enzyme catalyses DNA(n) + a 2'-deoxyribonucleoside 5'-triphosphate = DNA(n+1) + diphosphate. In terms of biological role, poorly processive, error-prone DNA polymerase involved in untargeted mutagenesis. Copies undamaged DNA at stalled replication forks, which arise in vivo from mismatched or misaligned primer ends. These misaligned primers can be extended by PolIV. Exhibits no 3'-5' exonuclease (proofreading) activity. May be involved in translesional synthesis, in conjunction with the beta clamp from PolIII. In Streptococcus pyogenes serotype M2 (strain MGAS10270), this protein is DNA polymerase IV.